We begin with the raw amino-acid sequence, 111 residues long: Disintegrin acostatin-alpha (111 aa).

Residues 1-20 form the signal peptide; sequence MIQVLLVTLCLAVFPYQGSS. The propeptide occupies 21–46; the sequence is IILESGNVNDYEVVYPRKVTALPKGA. Positions 47-111 constitute a Disintegrin domain; the sequence is IQPKNPCCDA…GDCPRKHFYA (65 aa). Position 48 is a pyrrolidone carboxylic acid; in Disintegrin acostatin-alpha, processed form (glutamine 48). Intrachain disulfides connect cysteine 53–cysteine 76, cysteine 67–cysteine 73, cysteine 72–cysteine 97, and cysteine 85–cysteine 104. Residues 89 to 91 carry the Cell attachment site motif; that stretch reads RGD. Positions 110-111 are excised as a propeptide; it reads YA.

Belongs to the disintegrin family. Dimeric disintegrin subfamily. As to quaternary structure, heterodimer with subunit beta; disulfide-linked. As to expression, expressed by the venom gland.

It localises to the secreted. Inhibits fibrinogen interaction with platelets. Acts by binding to alpha-IIb/beta-3 (ITGA2B/ITGB3) on the platelet surface and inhibits ADP-induced platelet aggregation in human platelet-rich plasma. In Agkistrodon contortrix contortrix (Southern copperhead), this protein is Disintegrin acostatin-alpha.